The chain runs to 1045 residues: Septation initiation network scaffold protein cdc11 (1045 aa).

Positions 1–11 are enriched in basic and acidic residues; the sequence is MEQLWLEHDLS. 2 disordered regions span residues 1–269 and 282–329; these read MEQL…NTKD and RGRM…PSLS. Positions 18-39 are enriched in polar residues; sequence PQEQGSDNSSEPPTTSNVNNTQ. Composition is skewed to low complexity over residues 40 to 52, 96 to 132, and 152 to 165; these read STGR…STEH, KQSP…NVSN, and ISSS…SEGS. A compositionally biased stretch (polar residues) spans 166–176; the sequence is LKSQQSNTRSN. Over residues 187-201 the composition is skewed to low complexity; sequence ASNASSSSSVVSSPS. 2 stretches are compositionally biased toward polar residues: residues 226–238 and 320–329; these read NQLT…NSFE and DSSNAFPSLS. Phosphoserine is present on Ser360. The segment at 377–417 is disordered; sequence DVGSSQSSSKTARLNSSPKSTLKTSSVKTRRSHSAQSSRKV. Residues 379–403 show a composition bias toward polar residues; the sequence is GSSQSSSKTARLNSSPKSTLKTSSV. Phosphoserine is present on Ser558. 15 LRR repeats span residues 604 to 625, 627 to 646, 647 to 668, 669 to 690, 691 to 712, 713 to 734, 736 to 757, 758 to 779, 780 to 801, 802 to 822, 846 to 867, 868 to 889, 892 to 913, 914 to 935, and 940 to 962; these read RIIQ…SELC, SIEE…GCPV, TIRD…SNLL, NLQY…SSLI, HLRE…QHLD, GLLK…NSNL, RLEE…SSLQ, NLMV…QPMI, HLRI…QFPH, LRTL…RRLK, DIRN…HMFL, GVRY…IATS, NLRV…KPLQ, MIHR…CDIL, and QLNV…IDDS. Residues 1005 to 1043 enclose the LRRCT domain; sequence AWRTRRKMYAEAILLACPHLEWLDGSDVSQSSRAAFTKS.

As to quaternary structure, interacts with sid4. When hyperphosphorylated, interacts with byr4. Also interacts with spg1, sid2, cdc13 and cdc16. In terms of processing, phosphorylated by cdc7 and cdk1. Hyperphosphorylated during anaphase. Dephosphorylated by par1.

The protein resides in the cytoplasm. The protein localises to the cytoskeleton. Its subcellular location is the microtubule organizing center. It localises to the spindle pole body. Its function is as follows. Essential for the onset of septum formation. Involved in the organization of astral microtubules during mitosis. Acts as a bridge between sid4 and the other SIN proteins mediating their association with the spindle pole body (SPB). The sid4-cdc11 complex organizes a signaling hub on the SPB which coordinates cell and nuclear division. In Schizosaccharomyces pombe (strain 972 / ATCC 24843) (Fission yeast), this protein is Septation initiation network scaffold protein cdc11 (cdc11).